Consider the following 259-residue polypeptide: 14-3-3-like protein (259 aa).

It belongs to the 14-3-3 family.

The polypeptide is 14-3-3-like protein (Helianthus annuus (Common sunflower)).